Reading from the N-terminus, the 687-residue chain is DNA-directed RNA polymerase subunit beta' (687 aa).

Zn(2+)-binding residues include Cys-69, Cys-71, Cys-87, and Cys-90. The Mg(2+) site is built by Asp-493, Asp-495, and Asp-497.

Belongs to the RNA polymerase beta' chain family. RpoC1 subfamily. As to quaternary structure, in plastids the minimal PEP RNA polymerase catalytic core is composed of four subunits: alpha, beta, beta', and beta''. When a (nuclear-encoded) sigma factor is associated with the core the holoenzyme is formed, which can initiate transcription. Mg(2+) is required as a cofactor. It depends on Zn(2+) as a cofactor.

The protein resides in the plastid. Its subcellular location is the chloroplast. The enzyme catalyses RNA(n) + a ribonucleoside 5'-triphosphate = RNA(n+1) + diphosphate. DNA-dependent RNA polymerase catalyzes the transcription of DNA into RNA using the four ribonucleoside triphosphates as substrates. The polypeptide is DNA-directed RNA polymerase subunit beta' (Angiopteris evecta (Mule's foot fern)).